The following is a 582-amino-acid chain: ATP-dependent lipid A-core flippase (582 aa).

A run of 5 helical transmembrane segments spans residues 25-45 (AGLIVAAIALILNAASDTFML), 69-89 (LAVIGLMVVRGVTGFVSSYCI), 137-159 (ASSSSALVTVVREGASIIGLFIM), 253-273 (PIIQLIASFALALVLYAASFP), and 275-295 (VMETLTAGTITVVFSAMIALM). Positions 28–310 (IVAAIALILN…LTNVNTQFQR (283 aa)) constitute an ABC transmembrane type-1 domain. The ABC transporter domain maps to 342-578 (IEFRHVTFYY…QGVYAQLNRM (237 aa)). 376-383 (GRSGSGKS) is an ATP binding site.

This sequence belongs to the ABC transporter superfamily. Lipid exporter (TC 3.A.1.106) family. As to quaternary structure, homodimer.

It is found in the cell inner membrane. It catalyses the reaction ATP + H2O + lipid A-core oligosaccharideSide 1 = ADP + phosphate + lipid A-core oligosaccharideSide 2.. Involved in lipopolysaccharide (LPS) biosynthesis. Translocates lipid A-core from the inner to the outer leaflet of the inner membrane. Transmembrane domains (TMD) form a pore in the inner membrane and the ATP-binding domain (NBD) is responsible for energy generation. The sequence is that of ATP-dependent lipid A-core flippase from Yersinia pestis bv. Antiqua (strain Antiqua).